We begin with the raw amino-acid sequence, 155 residues long: Photosystem I reaction center subunit XI (155 aa).

Helical transmembrane passes span 80–102 (LISG…LVSF) and 117–139 (GWSQ…AFFL).

The protein belongs to the PsaL family.

It localises to the cellular thylakoid membrane. The chain is Photosystem I reaction center subunit XI from Thermosynechococcus vestitus (strain NIES-2133 / IAM M-273 / BP-1).